The chain runs to 598 residues: Arginine--tRNA ligase (598 aa).

The short motif at 131 to 141 is the 'HIGH' region element; it reads ANPTGPMHVGH. Positions 288 to 309 are disordered; the sequence is KLPPPKSKKGQPPPQAQPDEEG.

The protein belongs to the class-I aminoacyl-tRNA synthetase family. Monomer.

Its subcellular location is the cytoplasm. It catalyses the reaction tRNA(Arg) + L-arginine + ATP = L-arginyl-tRNA(Arg) + AMP + diphosphate. The chain is Arginine--tRNA ligase from Anaeromyxobacter dehalogenans (strain 2CP-C).